We begin with the raw amino-acid sequence, 210 residues long: V-type ATP synthase subunit D (210 aa).

It belongs to the V-ATPase D subunit family.

Produces ATP from ADP in the presence of a proton gradient across the membrane. The polypeptide is V-type ATP synthase subunit D (Coprothermobacter proteolyticus (strain ATCC 35245 / DSM 5265 / OCM 4 / BT)).